The primary structure comprises 609 residues: Glutamine--fructose-6-phosphate aminotransferase [isomerizing] (609 aa).

Catalysis depends on cysteine 2, which acts as the Nucleophile; for GATase activity. Positions 2 to 218 constitute a Glutamine amidotransferase type-2 domain; it reads CGIVGAIAQR…EGDIAEITRR (217 aa). 2 SIS domains span residues 286–426 and 458–599; these read ADEL…LKGL and LAED…VDQP. Lysine 604 acts as the For Fru-6P isomerization activity in catalysis.

In terms of assembly, homodimer.

Its subcellular location is the cytoplasm. It carries out the reaction D-fructose 6-phosphate + L-glutamine = D-glucosamine 6-phosphate + L-glutamate. Functionally, catalyzes the first step in hexosamine metabolism, converting fructose-6P into glucosamine-6P using glutamine as a nitrogen source. The protein is Glutamine--fructose-6-phosphate aminotransferase [isomerizing] of Escherichia coli O157:H7.